The following is a 191-amino-acid chain: Threonylcarbamoyl-AMP synthase (191 aa).

One can recognise a YrdC-like domain in the interval 7–191 (QSELNDALKI…FHASTGKRLR (185 aa)).

Belongs to the SUA5 family. TsaC subfamily.

The protein localises to the cytoplasm. It catalyses the reaction L-threonine + hydrogencarbonate + ATP = L-threonylcarbamoyladenylate + diphosphate + H2O. In terms of biological role, required for the formation of a threonylcarbamoyl group on adenosine at position 37 (t(6)A37) in tRNAs that read codons beginning with adenine. Catalyzes the conversion of L-threonine, HCO(3)(-)/CO(2) and ATP to give threonylcarbamoyl-AMP (TC-AMP) as the acyladenylate intermediate, with the release of diphosphate. This is Threonylcarbamoyl-AMP synthase from Psychromonas ingrahamii (strain DSM 17664 / CCUG 51855 / 37).